Reading from the N-terminus, the 499-residue chain is Probable cytosol aminopeptidase (499 aa).

Residues lysine 263 and aspartate 268 each coordinate Mn(2+). Lysine 275 is an active-site residue. Aspartate 286, aspartate 345, and glutamate 347 together coordinate Mn(2+). The active site involves arginine 349.

It belongs to the peptidase M17 family. It depends on Mn(2+) as a cofactor.

It is found in the cytoplasm. The enzyme catalyses Release of an N-terminal amino acid, Xaa-|-Yaa-, in which Xaa is preferably Leu, but may be other amino acids including Pro although not Arg or Lys, and Yaa may be Pro. Amino acid amides and methyl esters are also readily hydrolyzed, but rates on arylamides are exceedingly low.. It catalyses the reaction Release of an N-terminal amino acid, preferentially leucine, but not glutamic or aspartic acids.. Functionally, presumably involved in the processing and regular turnover of intracellular proteins. Catalyzes the removal of unsubstituted N-terminal amino acids from various peptides. This chain is Probable cytosol aminopeptidase (pepA), found in Chlamydia trachomatis serovar D (strain ATCC VR-885 / DSM 19411 / UW-3/Cx).